We begin with the raw amino-acid sequence, 511 residues long: Sphingosine-1-phosphate transporter MFSD2B (511 aa).

9 helical membrane-spanning segments follow: residues Met-108–Val-128, Val-136–Pro-156, Ile-236–Val-256, Thr-280–Val-300, Asn-323–Leu-343, Leu-357–Val-377, Val-379–Val-399, Ala-415–Ile-435, and Leu-462–Tyr-482.

Belongs to the major facilitator superfamily.

It is found in the cell membrane. It catalyses the reaction sphing-4-enine 1-phosphate(in) = sphing-4-enine 1-phosphate(out). It carries out the reaction sphinganine 1-phosphate(in) = sphinganine 1-phosphate(out). The catalysed reaction is sphinga-4E,14Z-dienine-1-phosphate(in) = sphinga-4E,14Z-dienine-1-phosphate(out). Functionally, lipid transporter that specifically mediates export of sphingosine-1-phosphate in red blood cells and platelets. Sphingosine-1-phosphate is a signaling sphingolipid and its export from red blood cells into in the plasma is required for red blood cell morphology. Sphingosine-1-phosphate export from platelets is required for platelet aggregation and thrombus formation. In addition to export, also able to mediate S1P import. In Xenopus tropicalis (Western clawed frog), this protein is Sphingosine-1-phosphate transporter MFSD2B.